The chain runs to 498 residues: O-methyltransferase OME1 (498 aa).

A compositionally biased stretch (polar residues) spans 1 to 19; the sequence is MSTMALHRTASTKSDTTMA. Disordered regions lie at residues 1–23 and 42–83; these read MSTMALHRTASTKSDTTMACPNG and HRAE…QPEY. Low complexity predominate over residues 50 to 65; it reads SSTSSVSTTPTSPSFS. S-adenosyl-L-methionine is bound at residue Asp-358. The Proton acceptor role is filled by His-406.

This sequence belongs to the class I-like SAM-binding methyltransferase superfamily. Cation-independent O-methyltransferase family.

The protein operates within secondary metabolite biosynthesis. Its function is as follows. O-methyltransferase; part of the gene cluster that mediates the biosynthesis of a tyrosine-derived cytochalasan acting as a fungal signal recognized by resistant rice plants and leads to avirulence in Pi33 resistant rice cultivars. The first step in the pathway is catalyzed by the hybrid PKS-NRPS ACE1, assisted by the enoyl reductase RAP1, that are responsible for fusion of the tyrosine precursor and the polyketide backbone. The polyketide synthase module (PKS) of ACE1 is responsible for the synthesis of the polyketide backbone and the downstream nonribosomal peptide synthetase (NRPS) amidates the carboxyl end of the polyketide with the tyrosine precursor. Because ACE1 lacks a designated enoylreductase (ER) domain, the required activity is provided the enoyl reductase RAP1. Reduction by the hydrolyase ORFZ, followed by dehydration and intra-molecular Diels-Alder cyclization by the Diels-Alderase ORF3 then yield the required isoindolone-fused macrocycle. A number of oxidative steps catalyzed by the tailoring enzymes identified within the cluster, including cytochrome P450 monooxygenases CYP1 to CYP4, the FAD-linked oxidoreductase OXR2 and the short-chain dehydrogenase/reductase OXR1, are further required to afford the final cytochalasans that confer avirulence and which have still to be identified. The monooxygenase CYP1 has been shown to be a site-selective C-18 hydroxylase whereas the function of CYP3 is the site-selective epoxidation of the C-6/C-7 olefin that is present in some intermediate compounds. Finally, SYN2 and RAP2 are not required for avirulence in Pi33 resistant rice cultivars. This Pyricularia oryzae (strain 70-15 / ATCC MYA-4617 / FGSC 8958) (Rice blast fungus) protein is O-methyltransferase OME1.